Here is a 459-residue protein sequence, read N- to C-terminus: Putrescine aminotransferase (459 aa).

Pyridoxal 5'-phosphate-binding positions include 150-151 (GT) and glutamine 274. Lysine 300 carries the post-translational modification N6-(pyridoxal phosphate)lysine. A pyridoxal 5'-phosphate-binding site is contributed by threonine 332.

This sequence belongs to the class-III pyridoxal-phosphate-dependent aminotransferase family. Putrescine aminotransferase subfamily. The cofactor is pyridoxal 5'-phosphate.

The enzyme catalyses an alkane-alpha,omega-diamine + 2-oxoglutarate = an omega-aminoaldehyde + L-glutamate. It carries out the reaction putrescine + 2-oxoglutarate = 1-pyrroline + L-glutamate + H2O. The catalysed reaction is cadaverine + 2-oxoglutarate = 5-aminopentanal + L-glutamate. Its pathway is amine and polyamine degradation; putrescine degradation; 4-aminobutanal from putrescine (transaminase route): step 1/1. Functionally, catalyzes the aminotransferase reaction from putrescine to 2-oxoglutarate, leading to glutamate and 4-aminobutanal, which spontaneously cyclizes to form 1-pyrroline. This is the first step in one of two pathways for putrescine degradation, where putrescine is converted into 4-aminobutanoate (gamma-aminobutyrate or GABA) via 4-aminobutanal. Also functions as a cadaverine transaminase in a a L-lysine degradation pathway to succinate that proceeds via cadaverine, glutarate and L-2-hydroxyglutarate. The polypeptide is Putrescine aminotransferase (Shigella flexneri serotype 5b (strain 8401)).